The sequence spans 412 residues: Imidazolonepropionase (412 aa).

2 residues coordinate Fe(3+): histidine 76 and histidine 78. Zn(2+)-binding residues include histidine 76 and histidine 78. 4-imidazolone-5-propanoate-binding residues include arginine 85, tyrosine 148, and histidine 181. Residue tyrosine 148 coordinates N-formimidoyl-L-glutamate. Histidine 242 is a binding site for Fe(3+). Position 242 (histidine 242) interacts with Zn(2+). Glutamate 245 is a binding site for 4-imidazolone-5-propanoate. Aspartate 317 provides a ligand contact to Fe(3+). Position 317 (aspartate 317) interacts with Zn(2+). N-formimidoyl-L-glutamate is bound by residues asparagine 319 and glycine 321. Serine 322 serves as a coordination point for 4-imidazolone-5-propanoate.

It belongs to the metallo-dependent hydrolases superfamily. HutI family. The cofactor is Zn(2+). Fe(3+) is required as a cofactor.

Its subcellular location is the cytoplasm. The catalysed reaction is 4-imidazolone-5-propanoate + H2O = N-formimidoyl-L-glutamate. It participates in amino-acid degradation; L-histidine degradation into L-glutamate; N-formimidoyl-L-glutamate from L-histidine: step 3/3. Its function is as follows. Catalyzes the hydrolytic cleavage of the carbon-nitrogen bond in imidazolone-5-propanoate to yield N-formimidoyl-L-glutamate. It is the third step in the universal histidine degradation pathway. This is Imidazolonepropionase from Staphylococcus aureus (strain USA300 / TCH1516).